We begin with the raw amino-acid sequence, 394 residues long: Phosphopentomutase (394 aa).

Positions 13, 286, 291, 327, 328, and 339 each coordinate Mn(2+).

It belongs to the phosphopentomutase family. Requires Mn(2+) as cofactor.

The protein localises to the cytoplasm. The enzyme catalyses 2-deoxy-alpha-D-ribose 1-phosphate = 2-deoxy-D-ribose 5-phosphate. It carries out the reaction alpha-D-ribose 1-phosphate = D-ribose 5-phosphate. The protein operates within carbohydrate degradation; 2-deoxy-D-ribose 1-phosphate degradation; D-glyceraldehyde 3-phosphate and acetaldehyde from 2-deoxy-alpha-D-ribose 1-phosphate: step 1/2. Its function is as follows. Isomerase that catalyzes the conversion of deoxy-ribose 1-phosphate (dRib-1-P) and ribose 1-phosphate (Rib-1-P) to deoxy-ribose 5-phosphate (dRib-5-P) and ribose 5-phosphate (Rib-5-P), respectively. The polypeptide is Phosphopentomutase (Bacillus cereus (strain G9842)).